A 456-amino-acid chain; its full sequence is Serine--tRNA ligase (456 aa).

Residues 49-69 (HERNEVSSTIGELKQAGEEEA) are disordered. Residue 241 to 243 (TAE) coordinates L-serine. ATP-binding positions include 272-274 (RQE) and Val-288. Residue Glu-295 participates in L-serine binding. An ATP-binding site is contributed by 368 to 371 (EVSS). Ser-404 is an L-serine binding site.

This sequence belongs to the class-II aminoacyl-tRNA synthetase family. Type-1 seryl-tRNA synthetase subfamily. Homodimer. The tRNA molecule binds across the dimer.

Its subcellular location is the cytoplasm. It catalyses the reaction tRNA(Ser) + L-serine + ATP = L-seryl-tRNA(Ser) + AMP + diphosphate + H(+). The catalysed reaction is tRNA(Sec) + L-serine + ATP = L-seryl-tRNA(Sec) + AMP + diphosphate + H(+). It participates in aminoacyl-tRNA biosynthesis; selenocysteinyl-tRNA(Sec) biosynthesis; L-seryl-tRNA(Sec) from L-serine and tRNA(Sec): step 1/1. Functionally, catalyzes the attachment of serine to tRNA(Ser). Is also able to aminoacylate tRNA(Sec) with serine, to form the misacylated tRNA L-seryl-tRNA(Sec), which will be further converted into selenocysteinyl-tRNA(Sec). This chain is Serine--tRNA ligase, found in Halorubrum lacusprofundi (strain ATCC 49239 / DSM 5036 / JCM 8891 / ACAM 34).